The primary structure comprises 141 residues: Nucleoside diphosphate kinase (141 aa).

ATP-binding residues include K11, F59, R87, T93, R104, and N114. The active-site Pros-phosphohistidine intermediate is the H117.

The protein belongs to the NDK family. Homotetramer. Requires Mg(2+) as cofactor.

It localises to the cytoplasm. The catalysed reaction is a 2'-deoxyribonucleoside 5'-diphosphate + ATP = a 2'-deoxyribonucleoside 5'-triphosphate + ADP. It catalyses the reaction a ribonucleoside 5'-diphosphate + ATP = a ribonucleoside 5'-triphosphate + ADP. In terms of biological role, major role in the synthesis of nucleoside triphosphates other than ATP. The ATP gamma phosphate is transferred to the NDP beta phosphate via a ping-pong mechanism, using a phosphorylated active-site intermediate. The polypeptide is Nucleoside diphosphate kinase (Pseudomonas putida (strain W619)).